We begin with the raw amino-acid sequence, 997 residues long: FIP1[III]-like protein (997 aa).

Disordered regions lie at residues 250–272 (ITSN…LNSV), 289–475 (AGSF…ETEG), 534–553 (SRSS…KEED), and 880–900 (QGKV…TIEQ). Polar residues predominate over residues 261–272 (SHSYGSKDLNSV). Basic and acidic residues-rich tracts occupy residues 309–323 (TPSD…KEES), 334–346 (SVER…DRIR), 367–379 (ESLK…DQRE), and 388–404 (RLAE…EDSG). The Nuclear localization signal signature appears at 397–404 (IKRGEDSG). Residues 534 to 547 (SRSSFDLNQRNSRS) are compositionally biased toward polar residues. Residues 930-963 (EIIEEVKGVEIDNERIQESLKKMEKRRERFKGTK) adopt a coiled-coil conformation.

The protein belongs to the FIP1 family. As to quaternary structure, component of the cleavage and polyadenylation specificity factor (CPSF) complex. Forms a complex with cleavage and polyadenylation specificity factor (CPSF) subunits CLPS5, FIPS5, PAPS4, PCFS1, CSTF64 and CPSF30.

Its subcellular location is the nucleus. Its function is as follows. Component of the cleavage and polyadenylation specificity factor (CPSF) complex that plays a key role in pre-mRNA 3'-end formation, recognizing the AAUAAA signal sequence and interacting with poly(A) polymerase and other factors to bring about cleavage and poly(A) addition. FIP1L1 contributes to poly(A) site recognition and stimulates poly(A) addition. Binds to U-rich RNA sequence elements surrounding the poly(A) site. May act to tether poly(A) polymerase to the CPSF complex. The protein is FIP1[III]-like protein of Arabidopsis thaliana (Mouse-ear cress).